The primary structure comprises 108 residues: LBH domain-containing protein 2 (108 aa).

A compositionally biased stretch (pro residues) spans 1 to 11; the sequence is MSTPRPAPPQP. The disordered stretch occupies residues 1 to 108; that stretch reads MSTPRPAPPQ…SEDPAAPARG (108 aa). In terms of domain architecture, LBH spans 37–62; sequence QRLPSIVVEPSEADPVESGELRWPLE. Over residues 63–85 the composition is skewed to low complexity; sequence SAQRGPSQSRAAAAPSPSLPGEP.

The chain is LBH domain-containing protein 2 from Homo sapiens (Human).